The primary structure comprises 516 residues: Cytochrome P450 1A1 (516 aa).

Positions 33–44 (WQPRVPKGLKSP) are mitochondrial targeting signal. The O-linked (GlcNAc) serine glycan is linked to Ser71. Phe228 is a binding site for substrate. Position 461 (Cys461) interacts with heme.

Belongs to the cytochrome P450 family. Interacts with cytosolic chaperones HSP70 and HSP90; this interaction is required for initial targeting to mitochondria. Interacts (via mitochondrial targeting signal) with TOMM40 (via N-terminus); this interaction is required for translocation across the mitochondrial outer membrane. It depends on heme as a cofactor.

The protein localises to the endoplasmic reticulum membrane. Its subcellular location is the mitochondrion inner membrane. The protein resides in the microsome membrane. It localises to the cytoplasm. It catalyses the reaction an organic molecule + reduced [NADPH--hemoprotein reductase] + O2 = an alcohol + oxidized [NADPH--hemoprotein reductase] + H2O + H(+). The catalysed reaction is estrone + reduced [NADPH--hemoprotein reductase] + O2 = 2-hydroxyestrone + oxidized [NADPH--hemoprotein reductase] + H2O + H(+). The enzyme catalyses estrone + reduced [NADPH--hemoprotein reductase] + O2 = 4-hydroxyestrone + oxidized [NADPH--hemoprotein reductase] + H2O + H(+). It carries out the reaction estrone + reduced [NADPH--hemoprotein reductase] + O2 = 6alpha-hydroxyestrone + oxidized [NADPH--hemoprotein reductase] + H2O + H(+). It catalyses the reaction estrone + reduced [NADPH--hemoprotein reductase] + O2 = 15alpha-hydroxyestrone + oxidized [NADPH--hemoprotein reductase] + H2O + H(+). The catalysed reaction is estrone + reduced [NADPH--hemoprotein reductase] + O2 = 16alpha-hydroxyestrone + oxidized [NADPH--hemoprotein reductase] + H2O + H(+). The enzyme catalyses 17beta-estradiol + reduced [NADPH--hemoprotein reductase] + O2 = 2-hydroxy-17beta-estradiol + oxidized [NADPH--hemoprotein reductase] + H2O + H(+). It carries out the reaction 17beta-estradiol + reduced [NADPH--hemoprotein reductase] + O2 = 4-hydroxy-17beta-estradiol + oxidized [NADPH--hemoprotein reductase] + H2O + H(+). It catalyses the reaction 17beta-estradiol + reduced [NADPH--hemoprotein reductase] + O2 = 6alpha-hydroxy-17beta-estradiol + oxidized [NADPH--hemoprotein reductase] + H2O + H(+). The catalysed reaction is 17beta-estradiol + reduced [NADPH--hemoprotein reductase] + O2 = 7alpha-hydroxy-17beta-estradiol + oxidized [NADPH--hemoprotein reductase] + H2O + H(+). The enzyme catalyses 17beta-estradiol + reduced [NADPH--hemoprotein reductase] + O2 = 15alpha-hydroxy-17beta-estradiol + oxidized [NADPH--hemoprotein reductase] + H2O + H(+). It carries out the reaction (5Z,8Z,11Z)-eicosatrienoate + reduced [NADPH--hemoprotein reductase] + O2 = 19-hydroxy-(5Z,8Z,11Z)-eicosatrienoate + oxidized [NADPH--hemoprotein reductase] + H2O + H(+). It catalyses the reaction (5Z,8Z,11Z,14Z)-eicosatetraenoate + reduced [NADPH--hemoprotein reductase] + O2 = 16-hydroxy-(5Z,8Z,11Z,14Z)-eicosatetraenoate + oxidized [NADPH--hemoprotein reductase] + H2O + H(+). The catalysed reaction is (5Z,8Z,11Z,14Z)-eicosatetraenoate + reduced [NADPH--hemoprotein reductase] + O2 = 17-hydroxy-(5Z,8Z,11Z,14Z)-eicosatetraenoate + oxidized [NADPH--hemoprotein reductase] + H2O + H(+). The enzyme catalyses (5Z,8Z,11Z,14Z)-eicosatetraenoate + reduced [NADPH--hemoprotein reductase] + O2 = 18-hydroxy-(5Z,8Z,11Z,14Z)-eicosatetraenoate + oxidized [NADPH--hemoprotein reductase] + H2O + H(+). It carries out the reaction (5Z,8Z,11Z,14Z)-eicosatetraenoate + reduced [NADPH--hemoprotein reductase] + O2 = 19-hydroxy-(5Z,8Z,11Z,14Z)-eicosatetraenoate + oxidized [NADPH--hemoprotein reductase] + H2O + H(+). It catalyses the reaction (5Z,8Z,11Z,14Z,17Z)-eicosapentaenoate + reduced [NADPH--hemoprotein reductase] + O2 = 19-hydroxy-(5Z,8Z,11Z,14Z,17Z)-eicosapentaenoate + oxidized [NADPH--hemoprotein reductase] + H2O + H(+). The catalysed reaction is (5Z,8Z,11Z,14Z)-eicosatetraenoate + reduced [NADPH--hemoprotein reductase] + O2 = (8R,9S)-epoxy-(5Z,11Z,14Z)-eicosatrienoate + oxidized [NADPH--hemoprotein reductase] + H2O + H(+). The enzyme catalyses (5Z,8Z,11Z,14Z)-eicosatetraenoate + reduced [NADPH--hemoprotein reductase] + O2 = (11R,12S)-epoxy-(5Z,8Z,14Z)-eicosatrienoate + oxidized [NADPH--hemoprotein reductase] + H2O + H(+). It carries out the reaction (5Z,8Z,11Z,14Z)-eicosatetraenoate + reduced [NADPH--hemoprotein reductase] + O2 = (14S,15R)-epoxy-(5Z,8Z,11Z)-eicosatrienoate + oxidized [NADPH--hemoprotein reductase] + H2O + H(+). It catalyses the reaction (5Z,8Z,11Z,14Z)-eicosatetraenoate + reduced [NADPH--hemoprotein reductase] + O2 = (14R,15S)-epoxy-(5Z,8Z,11Z)-eicosatrienoate + oxidized [NADPH--hemoprotein reductase] + H2O + H(+). The catalysed reaction is (5Z,8Z,11Z,14Z,17Z)-eicosapentaenoate + reduced [NADPH--hemoprotein reductase] + O2 = (17R,18S)-epoxy-(5Z,8Z,11Z,14Z)-eicosatetraenoate + oxidized [NADPH--hemoprotein reductase] + H2O + H(+). The enzyme catalyses (4Z,7Z,10Z,13Z,16Z,19Z)-docosahexaenoate + reduced [NADPH--hemoprotein reductase] + O2 = (19S,20R)-epoxy-(4Z,7Z,10Z,13Z,16Z)-docosapentaenoate + oxidized [NADPH--hemoprotein reductase] + H2O + H(+). It carries out the reaction (4Z,7Z,10Z,13Z,16Z,19Z)-docosahexaenoate + reduced [NADPH--hemoprotein reductase] + O2 = (19R,20S)-epoxy-(4Z,7Z,10Z,13Z,16Z)-docosapentaenoate + oxidized [NADPH--hemoprotein reductase] + H2O + H(+). It catalyses the reaction all-trans-retinol + reduced [NADPH--hemoprotein reductase] + O2 = all-trans-retinal + oxidized [NADPH--hemoprotein reductase] + 2 H2O + H(+). The catalysed reaction is all-trans-retinal + reduced [NADPH--hemoprotein reductase] + O2 = all-trans-retinoate + oxidized [NADPH--hemoprotein reductase] + H2O + 2 H(+). The enzyme catalyses (13S)-hydroperoxy-(9Z,11E)-octadecadienoate = 13-oxo-(9Z,11E)-octadecadienoate + H2O. It carries out the reaction (12S)-hydroperoxy-(5Z,8Z,10E,14Z)-eicosatetraenoate = 12-oxo-(5Z,8Z,10E,14Z)-eicosatetraenoate + H2O. It catalyses the reaction (15S)-hydroperoxy-(5Z,8Z,11Z,13E)-eicosatetraenoate = 15-oxo-(5Z,8Z,11Z,13E)-eicosatetraenoate + H2O. The catalysed reaction is (5S)-hydroperoxy-(6E,8Z,11Z,14Z)-eicosatetraenoate = 5-oxo-(6E,8Z,11Z,14Z)-eicosatetraenoate + H2O. Its pathway is steroid hormone biosynthesis. The protein operates within lipid metabolism; fatty acid metabolism. It functions in the pathway cofactor metabolism; retinol metabolism. A cytochrome P450 monooxygenase involved in the metabolism of various endogenous substrates, including fatty acids, steroid hormones and vitamins. Mechanistically, uses molecular oxygen inserting one oxygen atom into a substrate, and reducing the second into a water molecule, with two electrons provided by NADPH via cytochrome P450 reductase (CPR; NADPH-ferrihemoprotein reductase). Catalyzes the hydroxylation of carbon-hydrogen bonds. Exhibits high catalytic activity for the formation of hydroxyestrogens from estrone (E1) and 17beta-estradiol (E2), namely 2-hydroxy E1 and E2, as well as D-ring hydroxylated E1 and E2 at the C15alpha and C16alpha positions. Displays different regioselectivities for polyunsaturated fatty acids (PUFA) hydroxylation. Catalyzes the epoxidation of double bonds of certain PUFA. Converts arachidonic acid toward epoxyeicosatrienoic acid (EET) regioisomers, 8,9-, 11,12-, and 14,15-EET, that function as lipid mediators in the vascular system. Displays an absolute stereoselectivity in the epoxidation of eicosapentaenoic acid (EPA) producing the 17(R),18(S) enantiomer. May play an important role in all-trans retinoic acid biosynthesis in extrahepatic tissues. Catalyzes two successive oxidative transformation of all-trans retinol to all-trans retinal and then to the active form all-trans retinoic acid. May also participate in eicosanoids metabolism by converting hydroperoxide species into oxo metabolites (lipoxygenase-like reaction, NADPH-independent). In Balaenoptera acutorostrata (Common minke whale), this protein is Cytochrome P450 1A1 (CYP1A1).